We begin with the raw amino-acid sequence, 131 residues long: Histone H2B.2 (131 aa).

Basic and acidic residues predominate over residues methionine 1–proline 19. The disordered stretch occupies residues methionine 1–lysine 38. Lysine 7 and lysine 8 each carry N6-acetyllysine; alternate. Residues lysine 7 and lysine 8 each participate in a glycyl lysine isopeptide (Lys-Gly) (interchain with G-Cter in SUMO); alternate cross-link. Phosphoserine is present on serine 11. At lysine 12 the chain carries N6-acetyllysine. Lysine 17 carries the N6-acetyllysine; alternate modification. A Glycyl lysine isopeptide (Lys-Gly) (interchain with G-Cter in SUMO); alternate cross-link involves residue lysine 17. Residue lysine 18 forms a Glycyl lysine isopeptide (Lys-Gly) (interchain with G-Cter in SUMO) linkage. Lysine 124 is covalently cross-linked (Glycyl lysine isopeptide (Lys-Gly) (interchain with G-Cter in ubiquitin)).

It belongs to the histone H2B family. As to quaternary structure, the nucleosome is a histone octamer containing two molecules each of H2A, H2B, H3 and H4 assembled in one H3-H4 heterotetramer and two H2A-H2B heterodimers. The octamer wraps approximately 147 bp of DNA. Monoubiquitinated by the UBC2-BRE1 complex to form H2BK123ub1. H2BK123ub1 gives a specific tag for epigenetic transcriptional activation and is also prerequisite for H3K4me and H3K79me formation. H2BK123ub1 also modulates the formation of double-strand breaks during meiosis and is a prerequisite for DNA-damage checkpoint activation. Post-translationally, phosphorylated by STE20 to form H2BS10ph during progression through meiotic prophase. May be correlated with chromosome condensation. In terms of processing, acetylated by GCN5 to form H2BK11ac and H2BK16ac. H2BK16ac can also be formed by ESA1. Acetylation of N-terminal lysines and particularly formation of H2BK11acK16ac has a positive effect on transcription. Sumoylation to form H2BK6su or H2BK7su, and probably also H2BK16su or H2BK17su, occurs preferentially near the telomeres and represses gene transcription.

Its subcellular location is the nucleus. It is found in the chromosome. Core component of nucleosome. Nucleosomes wrap and compact DNA into chromatin, limiting DNA accessibility to the cellular machineries which require DNA as a template. Histones thereby play a central role in transcription regulation, DNA repair, DNA replication and chromosomal stability. DNA accessibility is regulated via a complex set of post-translational modifications of histones, also called histone code, and nucleosome remodeling. In Candida glabrata (strain ATCC 2001 / BCRC 20586 / JCM 3761 / NBRC 0622 / NRRL Y-65 / CBS 138) (Yeast), this protein is Histone H2B.2 (HTB2).